A 77-amino-acid chain; its full sequence is Metallocarboxypeptidase inhibitor (77 aa).

Positions 1 to 32 (MAQKFTILFTILLVVIAAQDVMAQDATLTKLF) are cleaved as a signal peptide. Gln33 carries the pyrrolidone carboxylic acid modification. 3 disulfide bridges follow: Cys39/Cys55, Cys43/Cys58, and Cys49/Cys65. Residues 70–77 (GRAMAIGV) constitute a propeptide, hydrophobic peptide.

This sequence to potato MCPI. As to expression, ovaries.

Its function is as follows. May play a defensive role against insect attacks. In Solanum lycopersicum (Tomato), this protein is Metallocarboxypeptidase inhibitor.